The sequence spans 233 residues: Orotidine 5'-phosphate decarboxylase (233 aa).

Substrate-binding positions include Asp-13, Lys-35, 62 to 71 (DLKFHDIPNT), Thr-122, Arg-182, Gln-191, Gly-211, and Arg-212. The Proton donor role is filled by Lys-64.

This sequence belongs to the OMP decarboxylase family. Type 1 subfamily. In terms of assembly, homodimer.

It catalyses the reaction orotidine 5'-phosphate + H(+) = UMP + CO2. Its pathway is pyrimidine metabolism; UMP biosynthesis via de novo pathway; UMP from orotate: step 2/2. Functionally, catalyzes the decarboxylation of orotidine 5'-monophosphate (OMP) to uridine 5'-monophosphate (UMP). The sequence is that of Orotidine 5'-phosphate decarboxylase from Pseudomonas entomophila (strain L48).